The following is an 828-amino-acid chain: Periplasmic nitrate reductase (828 aa).

Positions 1-31 (MKLSRRSFMKANAVAAAAAAAGLSVPGVARA) form a signal peptide, tat-type signal. Residues 39–95 (IKWDKAPCRFCGTGCGVLVGTQQGRVVACQGDPDAPVNRGLNCIKGYFLPKIMYGKD) form the 4Fe-4S Mo/W bis-MGD-type domain. [4Fe-4S] cluster contacts are provided by Cys-46, Cys-49, Cys-53, and Cys-81. Residues Lys-83, Gln-150, Asn-175, Cys-179, 212–219 (WGANMAEM), 243–247 (STYQH), 262–264 (QSD), Met-372, Gln-376, Asn-482, 508–509 (SD), Lys-531, Asp-558, and 718–727 (TGRVLEHWHT) contribute to the Mo-bis(molybdopterin guanine dinucleotide) site. Residue Phe-794 coordinates substrate. Mo-bis(molybdopterin guanine dinucleotide) contacts are provided by Asn-802 and Lys-819.

This sequence belongs to the prokaryotic molybdopterin-containing oxidoreductase family. NasA/NapA/NarB subfamily. As to quaternary structure, component of the periplasmic nitrate reductase NapAB complex composed of NapA and NapB. Requires [4Fe-4S] cluster as cofactor. Mo-bis(molybdopterin guanine dinucleotide) is required as a cofactor. Predicted to be exported by the Tat system. The position of the signal peptide cleavage has not been experimentally proven.

It is found in the periplasm. The catalysed reaction is 2 Fe(II)-[cytochrome] + nitrate + 2 H(+) = 2 Fe(III)-[cytochrome] + nitrite + H2O. Catalytic subunit of the periplasmic nitrate reductase complex NapAB. Receives electrons from NapB and catalyzes the reduction of nitrate to nitrite. The chain is Periplasmic nitrate reductase from Shigella flexneri.